The sequence spans 734 residues: Photosystem I P700 chlorophyll a apoprotein A2 (734 aa).

The next 8 membrane-spanning stretches (helical) occupy residues 46–69 (IFAS…FHVA), 135–158 (LYTG…LHLQ), 175–199 (LNHH…HVAI), 273–291 (MAHH…GHMY), 330–353 (LHFQ…QHMY), 369–395 (AALY…IFFI), 417–439 (AIIS…LYVH), and 517–535 (FLVH…LILV). Residues C559 and C568 each contribute to the [4Fe-4S] cluster site. The next 2 membrane-spanning stretches (helical) occupy residues 575 to 596 (AFYL…YWHW) and 643 to 665 (LSVW…MFLI). Residues H654, M662, and Y670 each contribute to the chlorophyll a site. Residue W671 participates in phylloquinone binding. A helical membrane pass occupies residues 707–727 (LVGLAHFSVGYIFTYAAFLIA).

The protein belongs to the PsaA/PsaB family. As to quaternary structure, the PsaA/B heterodimer binds the P700 chlorophyll special pair and subsequent electron acceptors. PSI consists of a core antenna complex that captures photons, and an electron transfer chain that converts photonic excitation into a charge separation. The eukaryotic PSI reaction center is composed of at least 11 subunits. It depends on P700 is a chlorophyll a/chlorophyll a' dimer, A0 is one or more chlorophyll a, A1 is one or both phylloquinones and FX is a shared 4Fe-4S iron-sulfur center. as a cofactor.

Its subcellular location is the plastid. It is found in the chloroplast thylakoid membrane. The enzyme catalyses reduced [plastocyanin] + hnu + oxidized [2Fe-2S]-[ferredoxin] = oxidized [plastocyanin] + reduced [2Fe-2S]-[ferredoxin]. PsaA and PsaB bind P700, the primary electron donor of photosystem I (PSI), as well as the electron acceptors A0, A1 and FX. PSI is a plastocyanin-ferredoxin oxidoreductase, converting photonic excitation into a charge separation, which transfers an electron from the donor P700 chlorophyll pair to the spectroscopically characterized acceptors A0, A1, FX, FA and FB in turn. Oxidized P700 is reduced on the lumenal side of the thylakoid membrane by plastocyanin. The polypeptide is Photosystem I P700 chlorophyll a apoprotein A2 (Spinacia oleracea (Spinach)).